We begin with the raw amino-acid sequence, 397 residues long: Ubiquitin-like modifier-activating enzyme 5 (397 aa).

5 residues coordinate ATP: G76, D97, K120, N143, and N177. Zn(2+)-binding residues include C219 and C222. C243 serves as the catalytic Glycyl thioester intermediate. C296 and C301 together coordinate Zn(2+). The tract at residues 362–384 is disordered; that stretch reads LAYEPPASTKHSETTSTTAVSDD. Positions 375–384 are enriched in low complexity; sequence TTSTTAVSDD.

This sequence belongs to the ubiquitin-activating E1 family. UBA5 subfamily.

Its function is as follows. E1-like enzyme which activates UFM1. This Aedes aegypti (Yellowfever mosquito) protein is Ubiquitin-like modifier-activating enzyme 5.